A 116-amino-acid polypeptide reads, in one-letter code: Phosphoribosyl-AMP cyclohydrolase (116 aa).

Position 81 (Asp-81) interacts with Mg(2+). A Zn(2+)-binding site is contributed by Cys-82. 2 residues coordinate Mg(2+): Asp-83 and Asp-85. 2 residues coordinate Zn(2+): Cys-98 and Cys-105.

Belongs to the PRA-CH family. As to quaternary structure, homodimer. The cofactor is Mg(2+). Zn(2+) serves as cofactor.

The protein localises to the cytoplasm. It carries out the reaction 1-(5-phospho-beta-D-ribosyl)-5'-AMP + H2O = 1-(5-phospho-beta-D-ribosyl)-5-[(5-phospho-beta-D-ribosylamino)methylideneamino]imidazole-4-carboxamide. It participates in amino-acid biosynthesis; L-histidine biosynthesis; L-histidine from 5-phospho-alpha-D-ribose 1-diphosphate: step 3/9. Functionally, catalyzes the hydrolysis of the adenine ring of phosphoribosyl-AMP. This is Phosphoribosyl-AMP cyclohydrolase from Mycolicibacterium vanbaalenii (strain DSM 7251 / JCM 13017 / BCRC 16820 / KCTC 9966 / NRRL B-24157 / PYR-1) (Mycobacterium vanbaalenii).